A 269-amino-acid polypeptide reads, in one-letter code: Energy-coupling factor transporter ATP-binding protein EcfA1 (269 aa).

The ABC transporter domain maps to 8-242; the sequence is IVFKNVSFQY…AEELTTIGLD (235 aa). An ATP-binding site is contributed by 42-49; that stretch reads GHNGSGKS.

It belongs to the ABC transporter superfamily. Energy-coupling factor EcfA family. In terms of assembly, forms a stable energy-coupling factor (ECF) transporter complex composed of 2 membrane-embedded substrate-binding proteins (S component), 2 ATP-binding proteins (A component) and 2 transmembrane proteins (T component).

It localises to the cell membrane. Its function is as follows. ATP-binding (A) component of a common energy-coupling factor (ECF) ABC-transporter complex. Unlike classic ABC transporters this ECF transporter provides the energy necessary to transport a number of different substrates. The sequence is that of Energy-coupling factor transporter ATP-binding protein EcfA1 from Staphylococcus aureus (strain MSSA476).